A 218-amino-acid chain; its full sequence is Small ribosomal subunit protein uS7 (218 aa).

It belongs to the universal ribosomal protein uS7 family. Part of the 30S ribosomal subunit.

In terms of biological role, one of the primary rRNA binding proteins, it binds directly to 16S rRNA where it nucleates assembly of the head domain of the 30S subunit. Is located at the subunit interface close to the decoding center. The chain is Small ribosomal subunit protein uS7 (rps7) from Pyrococcus horikoshii (strain ATCC 700860 / DSM 12428 / JCM 9974 / NBRC 100139 / OT-3).